Here is a 312-residue protein sequence, read N- to C-terminus: MNILSQTQILHLSIAILLFITTSSSSLSPSSSSPSLSPSPPSSSPSSAPPSSLSPSSPPPLSLSPSSPPPPPPSSSPLSSLSPSLSPSPPSSSPSSAPPSSLSPSSPPPLSLSPSSPPPPPPSSSPLSSLSPSSSSSTYSNQTNLDYIKTSCNITLYKTICYNSLSPYASTIRSNPQKLAVIALNLTLSSAKSASKFVKNISHGGGLTRLEVVAVADCVEEIGDSVTSLQDSIRELDSINYKDSAKFEMVMSDVETWVSAALTNDDTCMDGFSLVKTAVKDLVRRHVVEVARLTSNALALINMYASTQENFS.

A signal peptide spans 1–25; the sequence is MNILSQTQILHLSIAILLFITTSSS. Composition is skewed to low complexity over residues 24–36 and 44–55; these read SSSL…SPSL and SPSSAPPSSLSP. The tract at residues 24 to 141 is disordered; the sequence is SSSLSPSSSS…PSSSSSTYSN (118 aa). Over residues 56-75 the composition is skewed to pro residues; the sequence is SSPPPLSLSPSSPPPPPPSS. Composition is skewed to low complexity over residues 76-85 and 93-104; these read SPLSSLSPSL and SPSSAPPSSLSP. Residues 105 to 124 are compositionally biased toward pro residues; sequence SSPPPLSLSPSSPPPPPPSS. Low complexity predominate over residues 125–137; it reads SPLSSLSPSSSSS. Residues N141, N153, N185, and N200 are each glycosylated (N-linked (GlcNAc...) asparagine). The cysteines at positions 152 and 161 are disulfide-linked. C218 and C268 are disulfide-bonded.

This sequence belongs to the PMEI family.

It is found in the secreted. It localises to the extracellular space. The protein resides in the apoplast. Its function is as follows. Pectin methylesterase (PME) inhibitor involved in the maintenance of cell wall integrity in response to necrotrophic pathogens. Modulates PME activity and pectin methylesterification during infection by Botrytis cinerea and contributes to resistance against the pathogen. This chain is Pectinesterase inhibitor 10, found in Arabidopsis thaliana (Mouse-ear cress).